A 270-amino-acid chain; its full sequence is Tryptophan synthase alpha chain (270 aa).

Catalysis depends on proton acceptor residues Glu49 and Asp60.

It belongs to the TrpA family. In terms of assembly, tetramer of two alpha and two beta chains.

It carries out the reaction (1S,2R)-1-C-(indol-3-yl)glycerol 3-phosphate + L-serine = D-glyceraldehyde 3-phosphate + L-tryptophan + H2O. Its pathway is amino-acid biosynthesis; L-tryptophan biosynthesis; L-tryptophan from chorismate: step 5/5. Functionally, the alpha subunit is responsible for the aldol cleavage of indoleglycerol phosphate to indole and glyceraldehyde 3-phosphate. The protein is Tryptophan synthase alpha chain of Buchnera aphidicola subsp. Melaphis rhois.